Consider the following 480-residue polypeptide: O-acyltransferase ausP (480 aa).

Catalysis depends on proton acceptor residues H180 and D412.

This sequence belongs to the plant acyltransferase family. In terms of assembly, monomer.

Its pathway is secondary metabolite biosynthesis; terpenoid biosynthesis. In terms of biological role, O-acyltransferase; part of the gene cluster that mediates the biosynthesis of calidodehydroaustin, a fungal meroterpenoid. The first step of the pathway is the synthesis of 3,5-dimethylorsellinic acid by the polyketide synthase ausA. 3,5-dimethylorsellinic acid is then prenylated by the polyprenyl transferase ausN. Further epoxidation by the FAD-dependent monooxygenase ausM and cyclization by the probable terpene cyclase ausL lead to the formation of protoaustinoid A. Protoaustinoid A is then oxidized to spiro-lactone preaustinoid A3 by the combined action of the FAD-binding monooxygenases ausB and ausC, and the dioxygenase ausE. Acid-catalyzed keto-rearrangement and ring contraction of the tetraketide portion of preaustinoid A3 by ausJ lead to the formation of preaustinoid A4. The aldo-keto reductase ausK, with the help of ausH, is involved in the next step by transforming preaustinoid A4 into isoaustinone which is in turn hydroxylated by the P450 monooxygenase ausI to form austinolide. The cytochrome P450 monooxygenase ausG modifies austinolide to austinol. Austinol is further acetylated to austin by the O-acetyltransferase ausP, which spontaneously changes to dehydroaustin. The cytochrome P450 monooxygenase ausR then converts dehydroaustin is into 7-dehydrodehydroaustin. The hydroxylation catalyzed by ausR permits the O-acetyltransferase ausQ to add an additional acetyl group to the molecule, leading to the formation of acetoxydehydroaustin. The short chain dehydrogenase ausT catalyzes the reduction of the double bond present between carbon atoms 1 and 2 to convert 7-dehydrodehydroaustin into 1,2-dihydro-7-hydroxydehydroaustin. AusQ catalyzes not only an acetylation reaction but also the addition of the PKS ausV diketide product to 1,2-dihydro-7-hydroxydehydroaustin, forming precalidodehydroaustin. Finally, the iron/alpha-ketoglutarate-dependent dioxygenase converts precalidodehydroaustin into calidodehydroaustin. This is O-acyltransferase ausP from Aspergillus calidoustus.